The primary structure comprises 270 residues: Cyclohexanol dehydrogenase (270 aa).

Residues R19, D40, D78, V79, N105, Y176, K180, I209, and T211 each coordinate NAD(+). Y176 functions as the Proton acceptor in the catalytic mechanism.

It belongs to the short-chain dehydrogenases/reductases (SDR) family. As to quaternary structure, homodimer.

The protein resides in the cytoplasm. It catalyses the reaction cyclohexanol + NAD(+) = cyclohexanone + NADH + H(+). Its activity is regulated as follows. Activity is enhanced by the addition of Ba(2+) and Mg(2+), but inhibited by the addition of Al(3+), Ca(2+), Co(2+), Cu(2+), Mn(2+) and Zn(2+). Functionally, catalyzes the oxidation of cyclohexanol to cyclohexanone. Can also use a broad range of other alcohols, including trans-cyclohexane-1,2-diol, trans-cyclopentane-1,2-diol, cyclopentanol, hexane-1,2-diol, ethanol, 1-propanol, 1-butanol, 1-pentanol and 1-hexanol. The polypeptide is Cyclohexanol dehydrogenase (Rhodococcus sp. (strain TK6)).